A 217-amino-acid polypeptide reads, in one-letter code: Ribonuclease HII 2 (217 aa).

In terms of domain architecture, RNase H type-2 spans 28-217; that stretch reads GLLAGVDEAG…VREVLLERRP (190 aa). Asp-34, Glu-35, and Asp-126 together coordinate a divalent metal cation.

The protein belongs to the RNase HII family. It depends on Mn(2+) as a cofactor. Mg(2+) serves as cofactor.

It localises to the cytoplasm. The catalysed reaction is Endonucleolytic cleavage to 5'-phosphomonoester.. Its function is as follows. Endonuclease that specifically degrades the RNA of RNA-DNA hybrids. In Methylibium petroleiphilum (strain ATCC BAA-1232 / LMG 22953 / PM1), this protein is Ribonuclease HII 2.